We begin with the raw amino-acid sequence, 288 residues long: Light-independent protochlorophyllide reductase iron-sulfur ATP-binding protein (288 aa).

ATP contacts are provided by residues 12 to 17 (GIGKST) and Lys-41. Ser-16 lines the Mg(2+) pocket. Residues Cys-97 and Cys-131 each contribute to the [4Fe-4S] cluster site. An ATP-binding site is contributed by 182–183 (NR).

It belongs to the NifH/BchL/ChlL family. Homodimer. Protochlorophyllide reductase is composed of three subunits; ChlL, ChlN and ChlB. [4Fe-4S] cluster is required as a cofactor.

The enzyme catalyses chlorophyllide a + oxidized 2[4Fe-4S]-[ferredoxin] + 2 ADP + 2 phosphate = protochlorophyllide a + reduced 2[4Fe-4S]-[ferredoxin] + 2 ATP + 2 H2O. Its pathway is porphyrin-containing compound metabolism; chlorophyll biosynthesis (light-independent). Component of the dark-operative protochlorophyllide reductase (DPOR) that uses Mg-ATP and reduced ferredoxin to reduce ring D of protochlorophyllide (Pchlide) to form chlorophyllide a (Chlide). This reaction is light-independent. The L component serves as a unique electron donor to the NB-component of the complex, and binds Mg-ATP. This is Light-independent protochlorophyllide reductase iron-sulfur ATP-binding protein from Synechocystis sp. (strain ATCC 27184 / PCC 6803 / Kazusa).